Here is a 455-residue protein sequence, read N- to C-terminus: Probable cytosolic iron-sulfur protein assembly protein 1 (455 aa).

WD repeat units lie at residues 31–70 (GHSS…TTSA), 90–129 (GHQR…DGSS), 163–202 (GHES…EFEC), 208–247 (EHSQ…DWFC), 253–292 (GHES…QCEA), 318–365 (YHDR…DEKS), and 380–453 (HASA…YAAT).

Belongs to the WD repeat CIA1 family.

Functionally, essential component of the cytosolic iron-sulfur (Fe/S) protein assembly machinery. Required for the maturation of extramitochondrial Fe/S proteins. This Mycosarcoma maydis (Corn smut fungus) protein is Probable cytosolic iron-sulfur protein assembly protein 1.